We begin with the raw amino-acid sequence, 208 residues long: MLFDELISEFDRGLRSIAGVSRMSRPVPQPAAAAPAELSAAERKHAAGLMRVNHVGEVCAQALYQAQKFATSSSELKEMFEHAAREEEDHLAWTAHRLKDLDSRPSLLNPLWYAGALAIGVVAGRLGDKVSLGFMAETERQVESHLDSHLSELPAADVESRAIVEQMRADEVKHGKTATDAGGIELPMPARMLMRAASKVMTSTAYYL.

Positions 57, 87, 90, 139, 171, and 174 each coordinate Fe cation.

The protein belongs to the COQ7 family. The cofactor is Fe cation.

It localises to the cell membrane. The catalysed reaction is a 5-methoxy-2-methyl-3-(all-trans-polyprenyl)benzene-1,4-diol + AH2 + O2 = a 3-demethylubiquinol + A + H2O. It functions in the pathway cofactor biosynthesis; ubiquinone biosynthesis. Its function is as follows. Catalyzes the hydroxylation of 2-nonaprenyl-3-methyl-6-methoxy-1,4-benzoquinol during ubiquinone biosynthesis. This Burkholderia thailandensis (strain ATCC 700388 / DSM 13276 / CCUG 48851 / CIP 106301 / E264) protein is 3-demethoxyubiquinol 3-hydroxylase.